Here is a 168-residue protein sequence, read N- to C-terminus: Pleiotrophin (168 aa).

A signal peptide spans 1–32; that stretch reads MQTPQYLQQRRKFAAAFLAFIFILAAVDTAEA. 5 disulfide bridges follow: Cys-47/Cys-76, Cys-55/Cys-85, Cys-62/Cys-89, Cys-99/Cys-131, and Cys-109/Cys-141. Chondroitin sulfate binding regions lie at residues 92–99 and 123–131; these read KKQFGAEC and KRALHNADC. A disordered region spans residues 141–168; that stretch reads CGKLTKSKPQAESKKKKKEGKKQEKMLD. Positions 147–168 are chondroitin sulfate A binding; the sequence is SKPQAESKKKKKEGKKQEKMLD.

As to quaternary structure, interacts with ALK and NEK6. Interacts with PTPRZ1 (via chondroitin sulfate groups); promotes formation of homooligomers; oligomerization impairs tyrosine phosphatase activity. Forms a complex with PTPRZ1 and CTNNB1; this complex inactivates PTPRZ1 protein tyrosine phosphatase activity through PTN interaction and stimulates tyrosine phosphorylation of CTNNB1. Interacts with ITGB3 and ITGA5. Forms a complex with PTPRZ1 and integrin alpha-V/beta-3 (ITGAV:ITGB3) that stimulates endothelial cell migration through ITGB3 'Tyr-773' phosphorylation. Interacts with SDC3 (via heparan sulfate chains); this interaction mediates the neurite outgrowth-promoting signal from PTN to the cytoskeleton of growing neurites; this interaction mediates osteoblast recruitment. Interacts with GPC2 (via heparan sulfate); this interaction promotes neurite outgrowth through binding of PTN with chondroitin sulfate of proteoglycans, thereby releasing PTPRS of chondroitin sulfate proteoglycans (CSPGs) and leading to binding with heparan sulfate of GPC2. Post-translationally, phosphorylated by NEK6.

The protein localises to the secreted. Its function is as follows. Secreted growth factor that mediates its signal through cell-surface proteoglycan and non-proteoglycan receptors. Binds cell-surface proteoglycan receptor via their chondroitin sulfate (CS) groups. Thereby regulates many processes like cell proliferation, cell survival, cell growth, cell differentiation and cell migration in several tissues namely neuron and bone. Also plays a role in synaptic plasticity and learning-related behavior by inhibiting long-term synaptic potentiation. Binds PTPRZ1, leading to neutralization of the negative charges of the CS chains of PTPRZ1, inducing PTPRZ1 clustering, thereby causing the dimerization and inactivation of its phosphatase activity leading to increased tyrosine phosphorylation of each of the PTPRZ1 substrates like ALK, CTNNB1 or AFAP1L2 in order to activate the PI3K-AKT pathway. Through PTPRZ1 binding controls oligodendrocyte precursor cell differentiation by enhancing the phosphorylation of AFAP1L2 in order to activate the PI3K-AKT pathway. Forms a complex with PTPRZ1 and integrin alpha-V/beta-3 (ITGAV:ITGB3) that stimulates endothelial cell migration through SRC dephosphorylation and activation that consequently leads to ITGB3 'Tyr-773' phosphorylation. In adult hippocampus promotes dendritic arborization, spine development, and functional integration and connectivity of newborn granule neurons through ALK by activating AKT signaling pathway. Binds GPC2 and chondroitin sulfate proteoglycans (CSPGs) at the neuron surface, leading to abrogation of binding between PTPRS and CSPGs and neurite outgrowth promotion. Binds SDC3 and mediates bone formation by recruiting and attaching osteoblasts/osteoblast precursors to the sites for new bone deposition. Binds ALK and promotes cell survival and cell proliferation through MAPK pathway activation. Inhibits proliferation and enhances differentiation of neural stem cells by inhibiting FGF2-induced fibroblast growth factor receptor signaling pathway. Mediates regulatory mechanisms in normal hemostasis and in hematopoietic regeneration and in maintaining the balance of myeloid and lymphoid regeneration. In addition may play a role in the female reproductive system, auditory response and the progesterone-induced decidualization pathway. The protein is Pleiotrophin of Bos taurus (Bovine).